A 311-amino-acid chain; its full sequence is 3-oxo-4,17-pregnadiene-20-carboxyl-CoA hydratase alpha subunit (311 aa).

Residues 198-295 (WDGVKAHELR…VAIGMPVRAT (98 aa)) are DUF35.

It belongs to the thioester dehydratase family. Heterodimer composed of ChsH1 and ChsH2. Two heterodimers combine to form a heterotetramer. The complex interacts with Ltp2 via the DUF35 C-terminal region of ChsH2. The ChsH1-ChsH2-Ltp2 protein complex is composed of two protomers that form a heterohexameric structure through the Ltp2 dimerization interface.

The enzyme catalyses 3-oxochola-4,17-dien-22-oyl-CoA + H2O = 17-hydroxy-3-oxochol-4-en-22-oyl-CoA. It catalyses the reaction (2E)-octenoyl-CoA + H2O = 3-hydroxyoctanoyl-CoA. The catalysed reaction is (2E)-decenoyl-CoA + H2O = 3-hydroxydecanoyl-CoA. It participates in steroid metabolism; cholesterol degradation. With respect to regulation, in the absence of the Ltp2 aldolase, ChsH1/ChsH2 can hydrate only about 30% of the 3-OPDC-CoA substrate. Complete turnover requires the presence of Ltp2. In terms of biological role, involved in cholesterol side chain degradation. Catalyzes the hydration of 3-oxo-4,17-pregnadiene-20-carboxyl-CoA (3-OPDC-CoA) to form 17-hydroxy-3-oxo-4-pregnene-20-carboxyl-CoA (17-HOPC-CoA), in the modified beta-oxidation pathway for cholesterol side chain degradation. Can also use octenoyl-CoA and decenoyl-CoA, with lower efficiency. In Mycobacterium tuberculosis (strain ATCC 25618 / H37Rv), this protein is 3-oxo-4,17-pregnadiene-20-carboxyl-CoA hydratase alpha subunit.